The following is a 255-amino-acid chain: 5-oxoprolinase subunit A (255 aa).

This sequence belongs to the LamB/PxpA family. In terms of assembly, forms a complex composed of PxpA, PxpB and PxpC.

It catalyses the reaction 5-oxo-L-proline + ATP + 2 H2O = L-glutamate + ADP + phosphate + H(+). Its function is as follows. Catalyzes the cleavage of 5-oxoproline to form L-glutamate coupled to the hydrolysis of ATP to ADP and inorganic phosphate. The chain is 5-oxoprolinase subunit A from Thermococcus onnurineus (strain NA1).